Here is a 139-residue protein sequence, read N- to C-terminus: ATP synthase epsilon chain (139 aa).

It belongs to the ATPase epsilon chain family. As to quaternary structure, F-type ATPases have 2 components, CF(1) - the catalytic core - and CF(0) - the membrane proton channel. CF(1) has five subunits: alpha(3), beta(3), gamma(1), delta(1), epsilon(1). CF(0) has three main subunits: a, b and c.

The protein localises to the cell inner membrane. In terms of biological role, produces ATP from ADP in the presence of a proton gradient across the membrane. The chain is ATP synthase epsilon chain from Pseudomonas putida (strain ATCC 700007 / DSM 6899 / JCM 31910 / BCRC 17059 / LMG 24140 / F1).